A 409-amino-acid polypeptide reads, in one-letter code: Cobalt-precorrin-5B C(1)-methyltransferase (409 aa).

The protein belongs to the CbiD family.

The catalysed reaction is Co-precorrin-5B + S-adenosyl-L-methionine = Co-precorrin-6A + S-adenosyl-L-homocysteine. The protein operates within cofactor biosynthesis; adenosylcobalamin biosynthesis; cob(II)yrinate a,c-diamide from sirohydrochlorin (anaerobic route): step 6/10. Catalyzes the methylation of C-1 in cobalt-precorrin-5B to form cobalt-precorrin-6A. The sequence is that of Cobalt-precorrin-5B C(1)-methyltransferase from Methanopyrus kandleri (strain AV19 / DSM 6324 / JCM 9639 / NBRC 100938).